Here is a 441-residue protein sequence, read N- to C-terminus: Amino-acid acetyltransferase (441 aa).

The region spanning 295 to 434 (EQVRRATIND…QALYNYQRRS (140 aa)) is the N-acetyltransferase domain.

It belongs to the acetyltransferase family. ArgA subfamily. In terms of assembly, homohexamer.

It localises to the cytoplasm. The enzyme catalyses L-glutamate + acetyl-CoA = N-acetyl-L-glutamate + CoA + H(+). Its pathway is amino-acid biosynthesis; L-arginine biosynthesis; N(2)-acetyl-L-ornithine from L-glutamate: step 1/4. The polypeptide is Amino-acid acetyltransferase (Serratia proteamaculans (strain 568)).